The chain runs to 706 residues: G2/M phase-specific E3 ubiquitin-protein ligase (706 aa).

The segment at 11–51 (NLACVFCRKHDDCPNKYGEKKTKEKWNLTVHYYCLLMSSGI) adopts a C2HC pre-PHD-type zinc-finger fold. The segment at 79–128 (LKCCVCKKNGASIGCVAPRCKRSYHFPCGLQRECIFQFTGNFASFCWDHR) adopts a PHD-type 1 zinc-finger fold. Residues 143–193 (PCTICLEFIEPIPSYNILRSPCCKNAWFHRDCLQVQAINAGVFFFRCTICN) form a PHD-type 2; degenerate zinc finger. The PHD-type 3 zinc-finger motif lies at 237–286 (RCRCKEGRDYNAPDSKWEIKRCQCCGSSGTHLACSSLRSWEQNWECLECR). Residues 371–698 (IWNSALDAFR…IRNTLRLEKE (328 aa)) enclose the HECT domain.

As to expression, predominantly expressed in brain, liver, kidney, testes and ovary.

The protein resides in the nucleus. Its subcellular location is the nucleolus. It localises to the cytoplasm. The enzyme catalyses S-ubiquitinyl-[E2 ubiquitin-conjugating enzyme]-L-cysteine + [acceptor protein]-L-lysine = [E2 ubiquitin-conjugating enzyme]-L-cysteine + N(6)-ubiquitinyl-[acceptor protein]-L-lysine.. It functions in the pathway protein modification; protein ubiquitination. Functionally, E3 ubiquitin-protein ligase which accepts ubiquitin from an E2 ubiquitin-conjugating enzyme in the form of a thioester and then directly transfers the ubiquitin to targeted substrates. Essential in early embryonic development to prevent apoptotic death. This Homo sapiens (Human) protein is G2/M phase-specific E3 ubiquitin-protein ligase (G2E3).